Consider the following 2323-residue polypeptide: C2 domain-containing protein 3 (2323 aa).

6 disordered regions span residues 1–27 (MKQR…SPST), 193–215 (RELR…SCRG), 402–426 (WNGL…DLND), 444–509 (SDVG…HTPA), 537–556 (PDSP…PPKP), and 698–745 (KLSS…TKKT). The span at 200 to 209 (ESSNTQSMIP) shows a compositional bias: polar residues. Ser453 carries the phosphoserine modification. Residues 474 to 483 (KVVESKEQKQ) show a composition bias toward basic and acidic residues. The C2 1 domain maps to 504 to 663 (PGHTPAMSLS…IQSELLSFSS (160 aa)). Residues 698-735 (KLSSSTQPAPVSAATSSDTILPETGQDTACTRNPQSSN) are compositionally biased toward polar residues. Ser713 carries the phosphoserine modification. C2 domains lie at 771–903 (SCNL…SRLL), 969–1131 (QPPV…YRED), 1155–1323 (SSGF…TGWY), and 1383–1517 (KEEE…TLTI). Residues 1550–1574 (EPARELDSMDCSSHSESEQHPRKSD) show a composition bias toward basic and acidic residues. Disordered regions lie at residues 1550 to 1599 (EPAR…NSAA) and 1798 to 1824 (LAHT…AARH). A compositionally biased stretch (polar residues) spans 1584–1599 (LQTSPTSTQVHGNSAA). The C2 6 domain occupies 1598 to 1726 (AAAQVCPAQE…SGFQFICGWY (129 aa)). Ser1871 carries the phosphoserine modification. Disordered regions lie at residues 1891–1918 (FSSQ…GRQD), 1952–2013 (ALTS…GGML), 2074–2163 (SEVL…SVGW), 2182–2231 (SEAF…EVST), and 2261–2323 (SHSP…TEET). The span at 1892-1904 (SSQSSPAVSQSQE) shows a compositional bias: low complexity. 2 stretches are compositionally biased toward polar residues: residues 1952–1965 (ALTS…SRAV) and 2074–2083 (SEVLSPQPTE). The segment covering 2110 to 2125 (AVSPQPAQGSPSQSGV) has biased composition (low complexity). Residues 2147 to 2158 (PSLTFSEAQEGS) show a composition bias toward polar residues. Positions 2182-2197 (SEAFSSEFSDSSESFE) are enriched in low complexity. Residues 2207–2216 (SKREDYKDSP) are compositionally biased toward basic and acidic residues. The segment covering 2222–2231 (QVPTGSEVST) has biased composition (polar residues).

Interacts with OFD1; OFD1 may act as a negative regulator of C2CD3. Associates with the BBSome complex. Interacts with IFT88, BBS4 and PCM1.

The protein localises to the cytoplasm. It is found in the cytoskeleton. It localises to the cilium basal body. Its subcellular location is the microtubule organizing center. The protein resides in the centrosome. The protein localises to the centriole. In terms of biological role, component of the centrioles that acts as a positive regulator of centriole elongation. Promotes assembly of centriolar distal appendage, a structure at the distal end of the mother centriole that acts as an anchor of the cilium, and is required for recruitment of centriolar distal appendages proteins CEP83, SCLT1, CEP89, FBF1 and CEP164. Not required for centriolar satellite integrity or RAB8 activation. Required for primary cilium formation. Required for sonic hedgehog/SHH signaling and for proteolytic processing of GLI3. The chain is C2 domain-containing protein 3 (C2cd3) from Mus musculus (Mouse).